Consider the following 432-residue polypeptide: 5-methylthioadenosine/S-adenosylhomocysteine deaminase (432 aa).

Zn(2+)-binding residues include histidine 62 and histidine 64. Residues glutamate 91 and histidine 184 each coordinate substrate. Residue histidine 211 coordinates Zn(2+). Substrate is bound by residues glutamate 214 and aspartate 299. Aspartate 299 is a Zn(2+) binding site.

The protein belongs to the metallo-dependent hydrolases superfamily. MTA/SAH deaminase family. Requires Zn(2+) as cofactor.

It catalyses the reaction S-adenosyl-L-homocysteine + H2O + H(+) = S-inosyl-L-homocysteine + NH4(+). The enzyme catalyses S-methyl-5'-thioadenosine + H2O + H(+) = S-methyl-5'-thioinosine + NH4(+). In terms of biological role, catalyzes the deamination of 5-methylthioadenosine and S-adenosyl-L-homocysteine into 5-methylthioinosine and S-inosyl-L-homocysteine, respectively. Is also able to deaminate adenosine. This Haloarcula marismortui (strain ATCC 43049 / DSM 3752 / JCM 8966 / VKM B-1809) (Halobacterium marismortui) protein is 5-methylthioadenosine/S-adenosylhomocysteine deaminase.